Reading from the N-terminus, the 161-residue chain is 3-isopropylmalate dehydratase small subunit (161 aa).

This sequence belongs to the LeuD family. LeuD type 2 subfamily. As to quaternary structure, heterodimer of LeuC and LeuD.

It carries out the reaction (2R,3S)-3-isopropylmalate = (2S)-2-isopropylmalate. Its pathway is amino-acid biosynthesis; L-leucine biosynthesis; L-leucine from 3-methyl-2-oxobutanoate: step 2/4. Catalyzes the isomerization between 2-isopropylmalate and 3-isopropylmalate, via the formation of 2-isopropylmaleate. The chain is 3-isopropylmalate dehydratase small subunit from Pyrobaculum islandicum (strain DSM 4184 / JCM 9189 / GEO3).